A 95-amino-acid polypeptide reads, in one-letter code: Aspartyl/glutamyl-tRNA(Asn/Gln) amidotransferase subunit C (95 aa).

The protein belongs to the GatC family. In terms of assembly, heterotrimer of A, B and C subunits.

The enzyme catalyses L-glutamyl-tRNA(Gln) + L-glutamine + ATP + H2O = L-glutaminyl-tRNA(Gln) + L-glutamate + ADP + phosphate + H(+). It carries out the reaction L-aspartyl-tRNA(Asn) + L-glutamine + ATP + H2O = L-asparaginyl-tRNA(Asn) + L-glutamate + ADP + phosphate + 2 H(+). Its function is as follows. Allows the formation of correctly charged Asn-tRNA(Asn) or Gln-tRNA(Gln) through the transamidation of misacylated Asp-tRNA(Asn) or Glu-tRNA(Gln) in organisms which lack either or both of asparaginyl-tRNA or glutaminyl-tRNA synthetases. The reaction takes place in the presence of glutamine and ATP through an activated phospho-Asp-tRNA(Asn) or phospho-Glu-tRNA(Gln). In Shouchella clausii (strain KSM-K16) (Alkalihalobacillus clausii), this protein is Aspartyl/glutamyl-tRNA(Asn/Gln) amidotransferase subunit C.